The primary structure comprises 317 residues: GTPase Era (317 aa).

The region spanning 23-190 (RSGFVALIGP…MDYLVETLPE (168 aa)) is the Era-type G domain. The segment at 31–38 (GPTNAGKS) is G1. Residue 31–38 (GPTNAGKS) participates in GTP binding. Residues 57 to 61 (QTTRA) are G2. Residues 78 to 81 (DTPG) form a G3 region. GTP is bound by residues 78 to 82 (DTPGI) and 140 to 143 (NKID). The segment at 140–143 (NKID) is G4. A G5 region spans residues 169–171 (ISA). In terms of domain architecture, KH type-2 spans 221–298 (LHQELPYASH…HLFLFVKVRE (78 aa)).

The protein belongs to the TRAFAC class TrmE-Era-EngA-EngB-Septin-like GTPase superfamily. Era GTPase family. In terms of assembly, monomer.

The protein localises to the cytoplasm. Its subcellular location is the cell inner membrane. Functionally, an essential GTPase that binds both GDP and GTP, with rapid nucleotide exchange. Plays a role in 16S rRNA processing and 30S ribosomal subunit biogenesis and possibly also in cell cycle regulation and energy metabolism. The sequence is that of GTPase Era from Agrobacterium fabrum (strain C58 / ATCC 33970) (Agrobacterium tumefaciens (strain C58)).